Consider the following 1068-residue polypeptide: Tricorn protease homolog (1068 aa).

Residues 61 to 326 are six-bladed beta propeller; it reads MKAYYMYPDI…DSLTKLDINL (266 aa). The interval 338-686 is seven-bladed beta propeller; the sequence is VNVMEYMNEA…RKGGVIDLSR (349 aa). Positions 692–762 are C-1; it reads EPEKEWRQML…RTSHSYETAY (71 aa). Histidine 756 functions as the Charge relay system in the catalytic mechanism. The tract at residues 771 to 864 is PDZ-like; the sequence is SVGGLGAEFE…RVTVKVLKDE (94 aa). Residues 865–1068 form a C-2 region; it reads RFLIYRYWVE…TAIELALKQL (204 aa). Residue glycine 927 coordinates substrate. Serine 974 serves as the catalytic Nucleophile. The active-site Charge relay system is the glutamate 1032.

The protein belongs to the peptidase S41B family.

It localises to the cytoplasm. Functionally, degrades oligopeptides in a sequential manner. This is Tricorn protease homolog (tri) from Saccharolobus solfataricus (strain ATCC 35092 / DSM 1617 / JCM 11322 / P2) (Sulfolobus solfataricus).